The primary structure comprises 999 residues: MEEAHLLPAADVLRRFSVTAEGGLSPAQVTRARERYGPNELPTEEGKSLWELVLEQFEDLLVRILLLAALVSFVLACFEEGEETTTAFVEPLVIVLILVANAVVGVWQERNAENAIEALKEYEPEMGKVIRSDRKGVQRIRARDIVPGDIVEVAVGDKVPADLRLIEIKSTTLRVDQSILTGESVSVTKHTDAIPDPRAVNQDKKNMLFSGTNIASGKAVGVAVATGLHTELGKIRNQMASVEPERTPLQQKLDEFGRQLSRAISVICMAVWVINIGHFADPAHGGSWLRGAVYYFKIAVALAVAAIPEGLPAVITTCLALGTRRMARKNAIVRSLPSVETLGCTSVICSDKTGTLTTNQMSVCRMFVVAEAEAGTCRLHEFTISGTTYAPEGEVRQGEQPVRCGKFDGLVELATICALCNDSALDYNEAKGVYEKVGEATETALTCLVEKMNVFDTDLQALSRVERAGACNAVIKQLMRKEFTLEFSRDRKSMSVYCTPTRPGLVAQGSKMFVKGAPESVIERCSSVRVGSRTVPLNTTSREQILAKVRDWGSGSDTLRCLALATRDAPPRKEAMQLDDCSKFVQYETDLTFVGCVGMLDPPRPEVASCIARCRQAGIRVVMITGDNKGTAVAICRRLGILEDTEDVVGKAYTGREFDDLSPEQQRHACRTARCFARVEPAHKSRIVENLQSFNEVTAMTGDGVNDAPALKKAEIGIAMGSGTAVAKSAAEMVLSDDNFASIVAAVEEGRAIYSNMKQFIRYLISSNVGEVVCIFLTAILGLPEALIPVQLLWVNLVTDGLPATALGFNPPDLDIMEKRPRNPREALISGWLFFRYLAIGVYVGLATVAAATWWFLYDAEGPQVTFYQLRNFLKCSEDNPLFTGTDCEVFESRFPTTMALSVLVTTEMCNALNSVSENQSLLRMPPWLNPWLLAAVAMSMALHFLILLVPPLPLIFQVTPLSGRQWVVVLQISLPVILLDEALKYLSRKHVDEEKGRQ.

Position 1 is an N-acetylmethionine (methionine 1). Over 1–48 the chain is Cytoplasmic; the sequence is MEEAHLLPAADVLRRFSVTAEGGLSPAQVTRARERYGPNELPTEEGKS. Phosphoserine is present on serine 17. Phosphothreonine is present on threonine 19. Phosphoserine is present on serine 25. A helical membrane pass occupies residues 49–69; that stretch reads LWELVLEQFEDLLVRILLLAA. Over 70–89 the chain is Extracellular; the sequence is LVSFVLACFEEGEETTTAFV. The chain crosses the membrane as a helical span at residues 90-110; that stretch reads EPLVIVLILVANAVVGVWQER. The Cytoplasmic segment spans residues 111-253; sequence NAENAIEALK…PERTPLQQKL (143 aa). Residues 254–273 form a helical membrane-spanning segment; it reads DEFGRQLSRAISVICMAVWV. At 274-295 the chain is on the extracellular side; sequence INIGHFADPAHGGSWLRGAVYY. The chain crosses the membrane as a helical span at residues 296–313; the sequence is FKIAVALAVAAIPEGLPA. 4 residues coordinate Ca(2+): valine 304, alanine 305, isoleucine 307, and glutamate 309. Residues 314–757 are Cytoplasmic-facing; it reads VITTCLALGT…EEGRAIYSNM (444 aa). Aspartate 351 serves as the catalytic 4-aspartylphosphate intermediate. The Mg(2+) site is built by aspartate 351 and threonine 353. Threonine 353 is an ATP binding site. The tract at residues 370–400 is interaction with phospholamban 1; that stretch reads AEAEAGTCRLHEFTISGTTYAPEGEVRQGEQ. Threonine 415 carries the post-translational modification Phosphothreonine. Residues glutamate 442, arginine 489, lysine 515, arginine 560, threonine 625, glycine 626, and aspartate 627 each contribute to the ATP site. The residue at position 662 (serine 662) is a Phosphoserine. Residues arginine 678 and lysine 684 each coordinate ATP. Residue aspartate 703 participates in Mg(2+) binding. Residue asparagine 706 participates in ATP binding. The helical transmembrane segment at 758 to 777 threads the bilayer; that stretch reads KQFIRYLISSNVGEVVCIFL. Residues asparagine 768 and glutamate 771 each coordinate Ca(2+). Residues 778 to 787 are Extracellular-facing; it reads TAILGLPEAL. Residues 788 to 808 form a helical membrane-spanning segment; the sequence is IPVQLLWVNLVTDGLPATALG. An interaction with phospholamban 2 region spans residues 788-808; the sequence is IPVQLLWVNLVTDGLPATALG. Ca(2+)-binding residues include asparagine 796, threonine 799, and aspartate 800. Residues 809-828 lie on the Cytoplasmic side of the membrane; sequence FNPPDLDIMEKRPRNPREAL. A helical transmembrane segment spans residues 829-851; sequence ISGWLFFRYLAIGVYVGLATVAA. The Extracellular segment spans residues 852 to 897; it reads ATWWFLYDAEGPQVTFYQLRNFLKCSEDNPLFTGTDCEVFESRFPT. Cysteine 876 and cysteine 888 are disulfide-bonded. A helical transmembrane segment spans residues 898–917; sequence TMALSVLVTTEMCNALNSVS. Ca(2+) is bound at residue glutamate 908. Topologically, residues 918–930 are cytoplasmic; the sequence is ENQSLLRMPPWLN. A helical membrane pass occupies residues 931–949; the sequence is PWLLAAVAMSMALHFLILL. The Extracellular segment spans residues 950-964; sequence VPPLPLIFQVTPLSG. The helical transmembrane segment at 965–985 threads the bilayer; the sequence is RQWVVVLQISLPVILLDEALK. Over 986–999 the chain is Cytoplasmic; the sequence is YLSRKHVDEEKGRQ.

The protein belongs to the cation transport ATPase (P-type) (TC 3.A.3) family. Type IIA subfamily. Interacts with sarcolipin (SLN). Interacts with phospholamban (PLN). Interacts with myoregulin (MRLN). Interacts with DWORF. Interacts with VMP1. Interacts with TUNAR; the interaction occurs at low levels in low glucose conditions and is increased by high glucose levels. It depends on Mg(2+) as a cofactor. Expressed in endothelial tissues.

The protein resides in the endoplasmic reticulum membrane. It localises to the sarcoplasmic reticulum membrane. It carries out the reaction Ca(2+)(in) + ATP + H2O = Ca(2+)(out) + ADP + phosphate + H(+). Its activity is regulated as follows. Inhibited by sarcolipin (SLN), phospholamban (PLN) and myoregulin (MRLN). Enhanced by DWORF; DWORF increases activity by displacing sarcolipin (SLN), phospholamban (PLN) and myoregulin (MRLN). In terms of biological role, this magnesium-dependent enzyme catalyzes the hydrolysis of ATP coupled with the transport of calcium. Transports calcium ions from the cytosol into the sarcoplasmic/endoplasmic reticulum lumen. Contributes to calcium sequestration involved in muscular excitation/contraction. This chain is Sarcoplasmic/endoplasmic reticulum calcium ATPase 3 (ATP2A3), found in Sus scrofa (Pig).